We begin with the raw amino-acid sequence, 88 residues long: Small ribosomal subunit protein bS20 (88 aa).

2 disordered regions span residues 1–25 (MPNIKSQIKRVKTNEKSRQRNKAVK) and 68–88 (HKNQAANRKSAISKKLNSLAA).

Belongs to the bacterial ribosomal protein bS20 family.

Functionally, binds directly to 16S ribosomal RNA. In Cutibacterium acnes (strain DSM 16379 / KPA171202) (Propionibacterium acnes), this protein is Small ribosomal subunit protein bS20.